The primary structure comprises 371 residues: D-alanine--D-alanine ligase (371 aa).

The 208-residue stretch at 154–361 (KKLLVAEGLP…YPTLLAAMVD (208 aa)) folds into the ATP-grasp domain. 182–237 (RERLGLPVFVKPARGGSSIGVSRVSDWAELPAAIEAARRHDPKVIVEAGIAGRELE) contributes to the ATP binding site. Residues Asp316, Glu328, and Asn330 each coordinate Mg(2+).

Belongs to the D-alanine--D-alanine ligase family. The cofactor is Mg(2+). Mn(2+) is required as a cofactor.

The protein localises to the cytoplasm. The catalysed reaction is 2 D-alanine + ATP = D-alanyl-D-alanine + ADP + phosphate + H(+). The protein operates within cell wall biogenesis; peptidoglycan biosynthesis. In terms of biological role, cell wall formation. The protein is D-alanine--D-alanine ligase of Mycobacterium sp. (strain JLS).